We begin with the raw amino-acid sequence, 206 residues long: MSSLVLIPCALLTQGIYAGLIGAISTVTMSACSAIRSIYNYKNADVNHIIKLLDIERKLIIIQSILNITTNSDTLSGKTPLELTDLEKTHVFELIKKKTDLTKDPIQLCLIFLHEAIENIHKDLSVIHEKIDYHNNKWFNYWRSLNIKHLITNLEADIIIMNERFDYLMKISAFLDHIKDSKKQINSMRWNLSNPIDRKLLFQSLD.

The N-terminal stretch at 1-18 (MSSLVLIPCALLTQGIYA) is a signal peptide.

This is an uncharacterized protein from Acanthamoeba polyphaga mimivirus (APMV).